We begin with the raw amino-acid sequence, 230 residues long: U2 small nuclear ribonucleoprotein A' (230 aa).

5 LRR repeats span residues Ser15–Thr36, Gly48–Glu69, His71–Glu92, Thr93–Ala114, and Lys115–Lys136. Residues Asn149–Met187 form the LRRCT domain.

Belongs to the U2 small nuclear ribonucleoprotein A family. In terms of assembly, associated with the spliceosome.

The protein localises to the nucleus. Involved in pre-mRNA splicing. This chain is U2 small nuclear ribonucleoprotein A' (LEA1), found in Yarrowia lipolytica (strain CLIB 122 / E 150) (Yeast).